A 150-amino-acid polypeptide reads, in one-letter code: Aspartate 1-decarboxylase (150 aa).

The Schiff-base intermediate with substrate; via pyruvic acid role is filled by Ser-25. Ser-25 is modified (pyruvic acid (Ser)). Thr-57 is a substrate binding site. The active-site Proton donor is the Tyr-58. 73–75 contributes to the substrate binding site; the sequence is GAA.

This sequence belongs to the PanD family. As to quaternary structure, heterooctamer of four alpha and four beta subunits. Pyruvate is required as a cofactor. Post-translationally, is synthesized initially as an inactive proenzyme, which is activated by self-cleavage at a specific serine bond to produce a beta-subunit with a hydroxyl group at its C-terminus and an alpha-subunit with a pyruvoyl group at its N-terminus.

It is found in the cytoplasm. The enzyme catalyses L-aspartate + H(+) = beta-alanine + CO2. The protein operates within cofactor biosynthesis; (R)-pantothenate biosynthesis; beta-alanine from L-aspartate: step 1/1. Catalyzes the pyruvoyl-dependent decarboxylation of aspartate to produce beta-alanine. The sequence is that of Aspartate 1-decarboxylase from Kocuria rhizophila (strain ATCC 9341 / DSM 348 / NBRC 103217 / DC2201).